The chain runs to 234 residues: Leucyl/phenylalanyl-tRNA--protein transferase (234 aa).

Belongs to the L/F-transferase family.

The protein localises to the cytoplasm. The enzyme catalyses N-terminal L-lysyl-[protein] + L-leucyl-tRNA(Leu) = N-terminal L-leucyl-L-lysyl-[protein] + tRNA(Leu) + H(+). It catalyses the reaction N-terminal L-arginyl-[protein] + L-leucyl-tRNA(Leu) = N-terminal L-leucyl-L-arginyl-[protein] + tRNA(Leu) + H(+). The catalysed reaction is L-phenylalanyl-tRNA(Phe) + an N-terminal L-alpha-aminoacyl-[protein] = an N-terminal L-phenylalanyl-L-alpha-aminoacyl-[protein] + tRNA(Phe). In terms of biological role, functions in the N-end rule pathway of protein degradation where it conjugates Leu, Phe and, less efficiently, Met from aminoacyl-tRNAs to the N-termini of proteins containing an N-terminal arginine or lysine. This is Leucyl/phenylalanyl-tRNA--protein transferase from Pectobacterium carotovorum subsp. carotovorum (strain PC1).